Reading from the N-terminus, the 362-residue chain is Probable dual-specificity RNA methyltransferase RlmN (362 aa).

Glu105 acts as the Proton acceptor in catalysis. One can recognise a Radical SAM core domain in the interval 111 to 344 (HEYGNSICVT…VTIRREQGHD (234 aa)). Cys118 and Cys349 form a disulfide bridge. [4Fe-4S] cluster contacts are provided by Cys125, Cys129, and Cys132. S-adenosyl-L-methionine contacts are provided by residues 175–176 (GE), Ser207, 230–232 (SLH), and Asn306. Cys349 serves as the catalytic S-methylcysteine intermediate.

This sequence belongs to the radical SAM superfamily. RlmN family. Requires [4Fe-4S] cluster as cofactor.

It localises to the cytoplasm. The catalysed reaction is adenosine(2503) in 23S rRNA + 2 reduced [2Fe-2S]-[ferredoxin] + 2 S-adenosyl-L-methionine = 2-methyladenosine(2503) in 23S rRNA + 5'-deoxyadenosine + L-methionine + 2 oxidized [2Fe-2S]-[ferredoxin] + S-adenosyl-L-homocysteine. It carries out the reaction adenosine(37) in tRNA + 2 reduced [2Fe-2S]-[ferredoxin] + 2 S-adenosyl-L-methionine = 2-methyladenosine(37) in tRNA + 5'-deoxyadenosine + L-methionine + 2 oxidized [2Fe-2S]-[ferredoxin] + S-adenosyl-L-homocysteine. Its function is as follows. Specifically methylates position 2 of adenine 2503 in 23S rRNA and position 2 of adenine 37 in tRNAs. This is Probable dual-specificity RNA methyltransferase RlmN from Bacillus cereus (strain ATCC 14579 / DSM 31 / CCUG 7414 / JCM 2152 / NBRC 15305 / NCIMB 9373 / NCTC 2599 / NRRL B-3711).